A 218-amino-acid polypeptide reads, in one-letter code: Probable transaldolase (218 aa).

The Schiff-base intermediate with substrate role is filled by lysine 83.

The protein belongs to the transaldolase family. Type 3B subfamily.

The protein resides in the cytoplasm. The catalysed reaction is D-sedoheptulose 7-phosphate + D-glyceraldehyde 3-phosphate = D-erythrose 4-phosphate + beta-D-fructose 6-phosphate. It functions in the pathway carbohydrate degradation; pentose phosphate pathway; D-glyceraldehyde 3-phosphate and beta-D-fructose 6-phosphate from D-ribose 5-phosphate and D-xylulose 5-phosphate (non-oxidative stage): step 2/3. In terms of biological role, transaldolase is important for the balance of metabolites in the pentose-phosphate pathway. This Kosmotoga olearia (strain ATCC BAA-1733 / DSM 21960 / TBF 19.5.1) protein is Probable transaldolase.